A 328-amino-acid chain; its full sequence is Aspartate carbamoyltransferase catalytic subunit (328 aa).

Residues Arg-70 and Thr-71 each contribute to the carbamoyl phosphate site. Lys-98 is an L-aspartate binding site. Carbamoyl phosphate-binding residues include Arg-120, His-150, and Gln-153. The L-aspartate site is built by Arg-183 and Arg-238. Gly-279 and Pro-280 together coordinate carbamoyl phosphate.

Belongs to the aspartate/ornithine carbamoyltransferase superfamily. ATCase family. Heterododecamer (2C3:3R2) of six catalytic PyrB chains organized as two trimers (C3), and six regulatory PyrI chains organized as three dimers (R2).

It carries out the reaction carbamoyl phosphate + L-aspartate = N-carbamoyl-L-aspartate + phosphate + H(+). It functions in the pathway pyrimidine metabolism; UMP biosynthesis via de novo pathway; (S)-dihydroorotate from bicarbonate: step 2/3. Catalyzes the condensation of carbamoyl phosphate and aspartate to form carbamoyl aspartate and inorganic phosphate, the committed step in the de novo pyrimidine nucleotide biosynthesis pathway. The chain is Aspartate carbamoyltransferase catalytic subunit from Methylococcus capsulatus (strain ATCC 33009 / NCIMB 11132 / Bath).